A 448-amino-acid polypeptide reads, in one-letter code: Exodeoxyribonuclease 7 large subunit (448 aa).

The protein belongs to the XseA family. As to quaternary structure, heterooligomer composed of large and small subunits.

The protein resides in the cytoplasm. It catalyses the reaction Exonucleolytic cleavage in either 5'- to 3'- or 3'- to 5'-direction to yield nucleoside 5'-phosphates.. In terms of biological role, bidirectionally degrades single-stranded DNA into large acid-insoluble oligonucleotides, which are then degraded further into small acid-soluble oligonucleotides. The protein is Exodeoxyribonuclease 7 large subunit of Shewanella sp. (strain ANA-3).